The chain runs to 398 residues: uncharacterized protein (398 aa).

The 67-residue stretch at 240-306 (SLNKNIDQLI…SITVTTNDGS (67 aa)) folds into the BIG2 domain.

This is an uncharacterized protein from Clostridium acetobutylicum (strain ATCC 824 / DSM 792 / JCM 1419 / IAM 19013 / LMG 5710 / NBRC 13948 / NRRL B-527 / VKM B-1787 / 2291 / W).